Consider the following 478-residue polypeptide: Aspartyl/glutamyl-tRNA(Asn/Gln) amidotransferase subunit B (478 aa).

This sequence belongs to the GatB/GatE family. GatB subfamily. In terms of assembly, heterotrimer of A, B and C subunits.

The catalysed reaction is L-glutamyl-tRNA(Gln) + L-glutamine + ATP + H2O = L-glutaminyl-tRNA(Gln) + L-glutamate + ADP + phosphate + H(+). The enzyme catalyses L-aspartyl-tRNA(Asn) + L-glutamine + ATP + H2O = L-asparaginyl-tRNA(Asn) + L-glutamate + ADP + phosphate + 2 H(+). Functionally, allows the formation of correctly charged Asn-tRNA(Asn) or Gln-tRNA(Gln) through the transamidation of misacylated Asp-tRNA(Asn) or Glu-tRNA(Gln) in organisms which lack either or both of asparaginyl-tRNA or glutaminyl-tRNA synthetases. The reaction takes place in the presence of glutamine and ATP through an activated phospho-Asp-tRNA(Asn) or phospho-Glu-tRNA(Gln). The polypeptide is Aspartyl/glutamyl-tRNA(Asn/Gln) amidotransferase subunit B (Syntrophotalea carbinolica (strain DSM 2380 / NBRC 103641 / GraBd1) (Pelobacter carbinolicus)).